The following is a 289-amino-acid chain: Ribosomal protein L11 methyltransferase (289 aa).

T135, G156, D179, and N225 together coordinate S-adenosyl-L-methionine.

This sequence belongs to the methyltransferase superfamily. PrmA family.

It localises to the cytoplasm. The enzyme catalyses L-lysyl-[protein] + 3 S-adenosyl-L-methionine = N(6),N(6),N(6)-trimethyl-L-lysyl-[protein] + 3 S-adenosyl-L-homocysteine + 3 H(+). In terms of biological role, methylates ribosomal protein L11. This chain is Ribosomal protein L11 methyltransferase, found in Chlorobaculum tepidum (strain ATCC 49652 / DSM 12025 / NBRC 103806 / TLS) (Chlorobium tepidum).